Reading from the N-terminus, the 761-residue chain is Phosphoribosylformylglycinamidine synthase subunit PurL (761 aa).

The segment covering 1–13 (MTSRVDTVDNAAS) has biased composition (polar residues). The tract at residues 1–23 (MTSRVDTVDNAASTPDHPQPFAE) is disordered. His57 is a catalytic residue. ATP is bound by residues Tyr60 and Lys104. A Mg(2+)-binding site is contributed by Glu106. Residues 107-110 (SHNH) and Arg129 each bind substrate. The Proton acceptor role is filled by His108. Asp130 contacts Mg(2+). A substrate-binding site is contributed by Gln259. Mg(2+) is bound at residue Asp287. 331–333 (ESQ) lines the substrate pocket. ATP contacts are provided by Asn519 and Gly556. Asn557 contacts Mg(2+). Ser559 lines the substrate pocket.

This sequence belongs to the FGAMS family. In terms of assembly, monomer. Part of the FGAM synthase complex composed of 1 PurL, 1 PurQ and 2 PurS subunits.

Its subcellular location is the cytoplasm. It catalyses the reaction N(2)-formyl-N(1)-(5-phospho-beta-D-ribosyl)glycinamide + L-glutamine + ATP + H2O = 2-formamido-N(1)-(5-O-phospho-beta-D-ribosyl)acetamidine + L-glutamate + ADP + phosphate + H(+). The protein operates within purine metabolism; IMP biosynthesis via de novo pathway; 5-amino-1-(5-phospho-D-ribosyl)imidazole from N(2)-formyl-N(1)-(5-phospho-D-ribosyl)glycinamide: step 1/2. Its function is as follows. Part of the phosphoribosylformylglycinamidine synthase complex involved in the purines biosynthetic pathway. Catalyzes the ATP-dependent conversion of formylglycinamide ribonucleotide (FGAR) and glutamine to yield formylglycinamidine ribonucleotide (FGAM) and glutamate. The FGAM synthase complex is composed of three subunits. PurQ produces an ammonia molecule by converting glutamine to glutamate. PurL transfers the ammonia molecule to FGAR to form FGAM in an ATP-dependent manner. PurS interacts with PurQ and PurL and is thought to assist in the transfer of the ammonia molecule from PurQ to PurL. The polypeptide is Phosphoribosylformylglycinamidine synthase subunit PurL (Mycobacteroides abscessus (strain ATCC 19977 / DSM 44196 / CCUG 20993 / CIP 104536 / JCM 13569 / NCTC 13031 / TMC 1543 / L948) (Mycobacterium abscessus)).